The primary structure comprises 291 residues: uncharacterized protein (291 aa).

6 consecutive transmembrane segments (helical) span residues 13–33, 40–60, 81–101, 128–148, 158–178, and 220–240; these read FDLFFAAIACICGILKVMEMG, LGTVSKNGMAVLAVLVALGFL, GFLNPCVILSVIEFFMMLICI, FGLFGAIFMPYIFAECIRLLL, VILGILVLGCLAMAGLAYLEY, and GNVWMYLAMFASFTLVLILLA. The N-linked (GlcNAc...) asparagine glycan is linked to N249. Residues 269–291 form a disordered region; that stretch reads MASEDPPKDPLPRQEGGGGDTIA.

The protein localises to the membrane. This is an uncharacterized protein from Encephalitozoon cuniculi (strain GB-M1) (Microsporidian parasite).